A 552-amino-acid polypeptide reads, in one-letter code: Sensor histidine kinase DpiB (552 aa).

The Cytoplasmic portion of the chain corresponds to 1–21; that stretch reads MLQLNENKQFAFFQRLAFPLR. The helical transmembrane segment at 22–42 threads the bilayer; it reads IFLLILVFSIFVIAALAQYFT. Over 43–182 the chain is Periplasmic; the sequence is ASFEDYLTLH…DSWRAEFLLP (140 aa). A helical membrane pass occupies residues 183-203; the sequence is MAGVFVVLLGILMLLSWFLAA. Topologically, residues 204 to 552 are cytoplasmic; the sequence is HIRRQMMGME…NDSSINPIDR (349 aa). Residues 222-292 form the PAS domain; the sequence is RQQEALFSSV…IDEKRQDVVA (71 aa). In terms of domain architecture, Histidine kinase spans 344–541; it reads TLRHEHLNWM…LFSIYIPKVK (198 aa). A Phosphohistidine; by autocatalysis modification is found at His-347.

Post-translationally, autophosphorylated.

Its subcellular location is the cell inner membrane. The catalysed reaction is ATP + protein L-histidine = ADP + protein N-phospho-L-histidine.. Its activity is regulated as follows. Autophosphorylation is induced in vitro by dithiothreitol (DTT). Member of the two-component regulatory system DpiA/DpiB, which is essential for expression of citrate-specific fermentation genes and genes involved in plasmid inheritance. Could be involved in response to both the presence of citrate and external redox conditions. Functions as a sensor kinase that phosphorylates DpiA in the presence of citrate. This Escherichia coli (strain K12) protein is Sensor histidine kinase DpiB (dpiB).